Reading from the N-terminus, the 211-residue chain is ATP-dependent Clp protease proteolytic subunit 2 (211 aa).

Ser-106 acts as the Nucleophile in catalysis. Residue His-131 is part of the active site.

This sequence belongs to the peptidase S14 family. In terms of assembly, fourteen ClpP subunits assemble into 2 heptameric rings which stack back to back to give a disk-like structure with a central cavity, resembling the structure of eukaryotic proteasomes.

The protein resides in the cytoplasm. The catalysed reaction is Hydrolysis of proteins to small peptides in the presence of ATP and magnesium. alpha-casein is the usual test substrate. In the absence of ATP, only oligopeptides shorter than five residues are hydrolyzed (such as succinyl-Leu-Tyr-|-NHMec, and Leu-Tyr-Leu-|-Tyr-Trp, in which cleavage of the -Tyr-|-Leu- and -Tyr-|-Trp bonds also occurs).. Functionally, cleaves peptides in various proteins in a process that requires ATP hydrolysis. Has a chymotrypsin-like activity. Plays a major role in the degradation of misfolded proteins. In Bradyrhizobium diazoefficiens (strain JCM 10833 / BCRC 13528 / IAM 13628 / NBRC 14792 / USDA 110), this protein is ATP-dependent Clp protease proteolytic subunit 2.